Reading from the N-terminus, the 678-residue chain is Endopolyphosphatase (678 aa).

Topologically, residues 1 to 2 (MR) are cytoplasmic. The chain crosses the membrane as a helical; Signal-anchor for type II membrane protein span at residues 3–23 (SPLLASLFALALSIASSEAAI). Topologically, residues 24 to 678 (SSTEQVPLSG…ELMLVSTETD (655 aa)) are vacuolar. A disordered region spans residues 70-109 (YKTGSTFDSGCHRKPKKDGKSEGKKATENERGNEDLDDKE). The segment covering 87 to 103 (DGKSEGKKATENERGNE) has biased composition (basic and acidic residues). Asparagine 138, asparagine 369, and asparagine 447 each carry an N-linked (GlcNAc...) asparagine glycan. The interval 504–547 (KGSGGHRHDVPKGDCSLPSNEDKPHCTFKRKPRHYSKRSPSRTN) is disordered. The span at 529 to 543 (CTFKRKPRHYSKRSP) shows a compositional bias: basic residues. N-linked (GlcNAc...) asparagine glycans are attached at residues asparagine 591 and asparagine 616.

The protein belongs to the endopolyphosphatase PPN1 family. It depends on a divalent metal cation as a cofactor. Processing by proteases in the vacuole may be required for activation.

It is found in the vacuole membrane. The enzyme catalyses [phosphate](n+1) + n H2O = (n+1) phosphate + n H(+). Functionally, catalyzes the hydrolysis of inorganic polyphosphate (polyP) chains of many hundreds of phosphate residues into shorter lengths. The chain is Endopolyphosphatase (PPN1) from Cryptococcus neoformans var. neoformans serotype D (strain JEC21 / ATCC MYA-565) (Filobasidiella neoformans).